The primary structure comprises 135 residues: QAKVEMLDNLLDIEVAYSLLKGGAEDNKKDPIDINYEKLKTKIEVVDKTTKEAEIILQYVKNTHAATHNTYTLVVEEIFKIVREGEYQKYRPFQDLPNRQLLWHGSRATNYAGILSQGLRIAPPEAPVTGYMFGK.

The region spanning 1-21 (QAKVEMLDNLLDIEVAYSLLK) is the PARP alpha-helical domain. The PARP catalytic domain occupies 30–135 (DPIDINYEKL…APVTGYMFGK (106 aa)). NAD(+) contacts are provided by residues 104–106 (HGS), glycine 113, and arginine 120. The active site involves lysine 135.

Belongs to the ARTD/PARP family. As to quaternary structure, homodimer; PARP-type zinc-fingers from separate parp1 molecules form a dimer module that specifically recognizes DNA strand breaks. In terms of processing, poly-ADP-ribosylated on serine, glutamate and aspartate residues by autocatalysis. Auto-ADP-ribosylation on serine takes place following interaction with HPF1. Auto poly-ADP-ribosylation on serine residues promotes its dissociation from chromatin.

The protein resides in the chromosome. It is found in the nucleus. The protein localises to the nucleolus. It localises to the cytoplasm. Its subcellular location is the cytosol. It catalyses the reaction NAD(+) + (ADP-D-ribosyl)n-acceptor = nicotinamide + (ADP-D-ribosyl)n+1-acceptor + H(+).. It carries out the reaction L-seryl-[protein] + NAD(+) = O-(ADP-D-ribosyl)-L-seryl-[protein] + nicotinamide + H(+). The enzyme catalyses L-aspartyl-[protein] + NAD(+) = 4-O-(ADP-D-ribosyl)-L-aspartyl-[protein] + nicotinamide. The catalysed reaction is L-glutamyl-[protein] + NAD(+) = 5-O-(ADP-D-ribosyl)-L-glutamyl-[protein] + nicotinamide. It catalyses the reaction L-tyrosyl-[protein] + NAD(+) = O-(ADP-D-ribosyl)-L-tyrosyl-[protein] + nicotinamide + H(+). It carries out the reaction L-histidyl-[protein] + NAD(+) = N(tele)-(ADP-D-ribosyl)-L-histidyl-[protein] + nicotinamide + H(+). Its activity is regulated as follows. ADP-ribosyltransferase activity is regulated via an allosteric activation mechanism. In absence of activation signal, parp1 is autoinhibited by the PARP alpha-helical domain (also named HD region), which prevents effective NAD(+)-binding. Activity is highly stimulated by signals, such as DNA strand breaks. Binding to damaged DNA unfolds the PARP alpha-helical domain, relieving autoinhibition. Poly-ADP-ribosyltransferase activity is tightly regulated and parp1 is removed from damaged chromatin following initial poly-ADP-ribosylation of chromatin to avoid prolonged residence (trapping) that has cytotoxic consequences. A number of factors or post-translational modifications (auto-poly-ADP-ribosylation) promote parp1 removal from chromatin. Functionally, poly-ADP-ribosyltransferase that mediates poly-ADP-ribosylation of proteins and plays a key role in DNA repair. Mediates glutamate, aspartate, serine, histidine or tyrosine ADP-ribosylation of proteins: the ADP-D-ribosyl group of NAD(+) is transferred to the acceptor carboxyl group of target residues and further ADP-ribosyl groups are transferred to the 2'-position of the terminal adenosine moiety, building up a polymer with an average chain length of 20-30 units. Serine ADP-ribosylation of proteins constitutes the primary form of ADP-ribosylation of proteins in response to DNA damage. Specificity for the different amino acids is conferred by interacting factors, such as hpf1 and nmnat1. Following interaction with hpf1, catalyzes serine ADP-ribosylation of target proteins; hpf1 confers serine specificity by completing the parp1 active site. Also catalyzes tyrosine ADP-ribosylation of target proteins following interaction with hpf1. Following interaction with nmnat1, catalyzes glutamate and aspartate ADP-ribosylation of target proteins; nmnat1 confers glutamate and aspartate specificity. Parp1 initiates the repair of DNA breaks: recognizes and binds DNA breaks within chromatin and recruits hpf1, licensing serine ADP-ribosylation of target proteins, such as histones (H2BS6ADPr and H3S10ADPr), thereby promoting decompaction of chromatin and the recruitment of repair factors leading to the reparation of DNA strand breaks. In addition to base excision repair (BER) pathway, also involved in double-strand breaks (DSBs) repair. Mediates the poly-ADP-ribosylation of a number of proteins. In addition to proteins, also able to ADP-ribosylate DNA: catalyzes ADP-ribosylation of DNA strand break termini containing terminal phosphates and a 2'-OH group in single- and double-stranded DNA, respectively. Parp1-mediated DNA repair in neurons plays a role in sleep: senses DNA damage in neurons and promotes sleep, facilitating efficient DNA repair. In addition to DNA repair, also involved in other processes, such as transcription regulation, programmed cell death, membrane repair, adipogenesis and innate immunity. Acts as a repressor of transcription: binds to nucleosomes and modulates chromatin structure in a manner similar to histone H1, thereby altering RNA polymerase II. Acts both as a positive and negative regulator of transcription elongation, depending on the context. Poly-ADP-ribose chains generated by parp1 also play a role in poly-ADP-ribose-dependent cell death, a process named parthanatos. Also acts as a negative regulator of the cGAS-STING pathway by mediating poly-ADP-ribosylation and inactivation of cgas. Acts as a negative regulator of adipogenesis by catalyzing poly ADP-ribosylation of histone H2B on 'Glu-35' (H2BE35ADPr). The chain is Poly [ADP-ribose] polymerase 1 (parp1) from Oncorhynchus masou (Cherry salmon).